The following is a 310-amino-acid chain: MESTHETWDLATSVGATATMVAAGRARATTTGLIDDRFAEPLVRAVGIDFMTRWATGDLAAADVDIPGATWGMQQMTDLLAARTRYFDAFFGDAAAAGVRQAVILASGLDARGYRLDWPAGTVLFEIDMPDVLEFKGRALTDLRAEPTAEVRMVAVDLRDDWPAALRAKGFDPTRPTAWSAEGLLPFLPPEAQDRLLDAITSLSASGSRLAAEVALLGSDSEDGALGADGARDLEPLLARWREHGFDLDLGDLGNSGPRNDVDDYLEARGWTSTRTPLAALLDAAGLEVPRPADGRKSLSDNYYSTAIKG.

Residues Asp-128 and 157–158 (DL) contribute to the S-adenosyl-L-methionine site.

Belongs to the UPF0677 family.

Its function is as follows. Exhibits S-adenosyl-L-methionine-dependent methyltransferase activity. The polypeptide is Putative S-adenosyl-L-methionine-dependent methyltransferase MSMEG_1888/MSMEI_1848 (Mycolicibacterium smegmatis (strain ATCC 700084 / mc(2)155) (Mycobacterium smegmatis)).